We begin with the raw amino-acid sequence, 283 residues long: F-box only protein 27 (283 aa).

The tract at residues 1–23 is disordered; that stretch reads MGASVSRGRAARVPAPEPEPEEA. An F-box domain is found at 23-70; it reads ALDLSQLPPELLLVVLSHVPPRTLLGRCRQVCRGWRALVDGQALWLLI. One can recognise an FBA domain in the interval 104–280; the sequence is FCARRPIGRN…VTNSSVIVRV (177 aa).

In terms of assembly, part of a SCF (SKP1-cullin-F-box) protein ligase complex. Interacts with SKP1 and CUL1. In terms of tissue distribution, predominantly expressed in brain, heart and kidney. Expressed at lower levels in liver and lung.

Substrate-recognition component of the SCF (SKP1-CUL1-F-box protein)-type E3 ubiquitin ligase complex. Able to recognize and bind denatured glycoproteins, which are modified with complex-type oligosaccharides. In Homo sapiens (Human), this protein is F-box only protein 27 (FBXO27).